The following is a 108-amino-acid chain: uncharacterized protein (108 aa).

A helical transmembrane segment spans residues 15–37 (SYYFYIFWNFFLPMFIVYRGFGL).

It localises to the membrane. This is an uncharacterized protein from Archaeoglobus fulgidus (strain ATCC 49558 / DSM 4304 / JCM 9628 / NBRC 100126 / VC-16).